A 321-amino-acid chain; its full sequence is Lipoyl synthase (321 aa).

[4Fe-4S] cluster contacts are provided by cysteine 68, cysteine 73, cysteine 79, cysteine 94, cysteine 98, cysteine 101, and serine 308. A Radical SAM core domain is found at 80–297; it reads FNHGTATFMI…KDVAMGLGFS (218 aa).

This sequence belongs to the radical SAM superfamily. Lipoyl synthase family. [4Fe-4S] cluster serves as cofactor.

Its subcellular location is the cytoplasm. It catalyses the reaction [[Fe-S] cluster scaffold protein carrying a second [4Fe-4S](2+) cluster] + N(6)-octanoyl-L-lysyl-[protein] + 2 oxidized [2Fe-2S]-[ferredoxin] + 2 S-adenosyl-L-methionine + 4 H(+) = [[Fe-S] cluster scaffold protein] + N(6)-[(R)-dihydrolipoyl]-L-lysyl-[protein] + 4 Fe(3+) + 2 hydrogen sulfide + 2 5'-deoxyadenosine + 2 L-methionine + 2 reduced [2Fe-2S]-[ferredoxin]. The protein operates within protein modification; protein lipoylation via endogenous pathway; protein N(6)-(lipoyl)lysine from octanoyl-[acyl-carrier-protein]: step 2/2. Functionally, catalyzes the radical-mediated insertion of two sulfur atoms into the C-6 and C-8 positions of the octanoyl moiety bound to the lipoyl domains of lipoate-dependent enzymes, thereby converting the octanoylated domains into lipoylated derivatives. The chain is Lipoyl synthase from Aeromonas hydrophila subsp. hydrophila (strain ATCC 7966 / DSM 30187 / BCRC 13018 / CCUG 14551 / JCM 1027 / KCTC 2358 / NCIMB 9240 / NCTC 8049).